A 175-amino-acid polypeptide reads, in one-letter code: MTNKEVLDNASLQRALTRITYEIIERNKGGQDLVLVGIKTRGEFLAHRIANRLEQLEGVKIPVMAIDITNFRDDVLNHDDSLGLNDEEKTNIADKNIVLIDDVLFTGRTIRAALDALIHIGRPNTIALAVLVDRGHRELPIRADFVGKNIPTAQNEKIKVLVQEIDGRDAVEIVH.

The PRPP-binding motif lies at 97 to 109; that stretch reads IVLIDDVLFTGRT.

Belongs to the purine/pyrimidine phosphoribosyltransferase family. PyrR subfamily. In terms of assembly, homodimer and homohexamer; in equilibrium.

It carries out the reaction UMP + diphosphate = 5-phospho-alpha-D-ribose 1-diphosphate + uracil. In terms of biological role, regulates transcriptional attenuation of the pyrimidine nucleotide (pyr) operon by binding in a uridine-dependent manner to specific sites on pyr mRNA. This disrupts an antiterminator hairpin in the RNA and favors formation of a downstream transcription terminator, leading to a reduced expression of downstream genes. Also displays a weak uracil phosphoribosyltransferase activity which is not physiologically significant. The sequence is that of Bifunctional protein PyrR from Leuconostoc citreum (strain KM20).